The following is a 526-amino-acid chain: pH-sensitive chloride channel 2 (526 aa).

The signal sequence occupies residues Met1 to Ala18. The Extracellular segment spans residues Ala19 to Tyr300. Residues Asn33, Asn42, Asn52, Asn192, Asn231, Asn264, Asn271, and Asn283 are each glycosylated (N-linked (GlcNAc...) asparagine). A helical membrane pass occupies residues Val301–Leu321. Topologically, residues Gln322–Pro327 are cytoplasmic. The chain crosses the membrane as a helical span at residues Ala328 to Gln347. Topologically, residues Glu348–Ser360 are extracellular. The helical transmembrane segment at Glu361–Val381 threads the bilayer. Residues Asn382–Arg505 lie on the Cytoplasmic side of the membrane. Residues Ile463–Phe488 form a disordered region. A helical membrane pass occupies residues Phe506 to Leu526.

This sequence belongs to the ligand-gated ion channel (TC 1.A.9) family. As to expression, in third-instar larvae, expressed in the principal cells of the excretory Malpighian tubules (at protein level). Also detected in the enterocytes of the copper cell region and the iron cell region of the larval midgut (at protein level). In the copper cell region expression is confined to the interstitial cells and in the iron cell region it is expressed in the anterior portion (at protein level). Expressed in the Malpighian tubules and the middle midgut of third instar larvae and adults.

The protein resides in the apical cell membrane. The protein localises to the cell projection. It is found in the microvillus membrane. Its subcellular location is the late endosome membrane. It localises to the lysosome membrane. It carries out the reaction chloride(in) = chloride(out). Functionally, ligand and pH-gated channel that mediates chloride transport primarily in the mid-gut and thereby functions in larval metabolism and fluid homeostasis. Channel opening is triggered by zinc binding or, to a lesser extent, an increase in extracellular pH. Zinc-dependent activity in the mid-gut is required for modulating Tor-dependent metabolic programs that promote larval feeding and systematic growth. It may therefore act as an intestinal zinc sensor that mediates larval growth and metabolism in response to micronutrient availability. Activates Tor signaling via its activity in maintaining lysosome homeostasis in interstitial cells and/or by its role in activating the release of insulin-like peptides in the brain after feeding, via an unknown mechanism. Functions in lysosome homeostasis by regulating chloride transport into enterocyte lysosomes to sustain V-ATPase function which maintains lysosomal acidification and consequently promotes Tor activation at the lysosome membrane. Also appears to play a role in regulating fluid secretion and osmotic homeostasis in Malpighian tubules in response to the pH of extracellular urine. This function is important for proper urine production during diuresis. This is pH-sensitive chloride channel 2 from Drosophila melanogaster (Fruit fly).